A 339-amino-acid polypeptide reads, in one-letter code: DNA-directed RNA polymerase subunit alpha (339 aa).

The alpha N-terminal domain (alpha-NTD) stretch occupies residues methionine 1–glutamate 233. Residues lysine 267–lysine 339 form an alpha C-terminal domain (alpha-CTD) region.

Belongs to the RNA polymerase alpha chain family. In terms of assembly, in plastids the minimal PEP RNA polymerase catalytic core is composed of four subunits: alpha, beta, beta', and beta''. When a (nuclear-encoded) sigma factor is associated with the core the holoenzyme is formed, which can initiate transcription.

It is found in the plastid. The protein localises to the chloroplast. The catalysed reaction is RNA(n) + a ribonucleoside 5'-triphosphate = RNA(n+1) + diphosphate. In terms of biological role, DNA-dependent RNA polymerase catalyzes the transcription of DNA into RNA using the four ribonucleoside triphosphates as substrates. This chain is DNA-directed RNA polymerase subunit alpha, found in Piper cenocladum (Ant piper).